The following is a 329-amino-acid chain: GTPase Obg (329 aa).

The region spanning 1–159 is the Obg domain; it reads MQFIDQAIID…WSLQLELKLL (159 aa). An OBG-type G domain is found at 160–328; it reads AEVGIIGLPN…LLSSIWNELG (169 aa). Residues 166–173, 191–195, 213–216, 280–283, and 309–311 contribute to the ATP site; these read GLPNAGKS, FTTLI, DIPG, NKKE, and SAV. Mg(2+) is bound by residues Ser-173 and Thr-193.

This sequence belongs to the TRAFAC class OBG-HflX-like GTPase superfamily. OBG GTPase family. Monomer. The cofactor is Mg(2+).

It is found in the cytoplasm. In terms of biological role, an essential GTPase which binds GTP, GDP and possibly (p)ppGpp with moderate affinity, with high nucleotide exchange rates and a fairly low GTP hydrolysis rate. Plays a role in control of the cell cycle, stress response, ribosome biogenesis and in those bacteria that undergo differentiation, in morphogenesis control. The polypeptide is GTPase Obg (Prochlorococcus marinus (strain NATL2A)).